The chain runs to 94 residues: Small ribosomal subunit protein uS19 (94 aa).

It belongs to the universal ribosomal protein uS19 family.

In terms of biological role, protein S19 forms a complex with S13 that binds strongly to the 16S ribosomal RNA. The sequence is that of Small ribosomal subunit protein uS19 from Caldicellulosiruptor saccharolyticus (strain ATCC 43494 / DSM 8903 / Tp8T 6331).